We begin with the raw amino-acid sequence, 277 residues long: NAD kinase (277 aa).

The Proton acceptor role is filled by Asp-67. Residues 67–68, Arg-72, 137–138, Lys-148, Arg-165, Asp-167, 178–183, Leu-202, and Gln-236 contribute to the NAD(+) site; these read DG, NE, and TGYAMS.

Belongs to the NAD kinase family. Requires a divalent metal cation as cofactor.

The protein resides in the cytoplasm. The enzyme catalyses NAD(+) + ATP = ADP + NADP(+) + H(+). In terms of biological role, involved in the regulation of the intracellular balance of NAD and NADP, and is a key enzyme in the biosynthesis of NADP. Catalyzes specifically the phosphorylation on 2'-hydroxyl of the adenosine moiety of NAD to yield NADP. This is NAD kinase from Pyrococcus furiosus (strain ATCC 43587 / DSM 3638 / JCM 8422 / Vc1).